The sequence spans 197 residues: Nucleoside triphosphate pyrophosphatase (197 aa).

Residue aspartate 70 is the Proton acceptor of the active site.

It belongs to the Maf family. It depends on a divalent metal cation as a cofactor.

The protein resides in the cytoplasm. It catalyses the reaction a ribonucleoside 5'-triphosphate + H2O = a ribonucleoside 5'-phosphate + diphosphate + H(+). The enzyme catalyses a 2'-deoxyribonucleoside 5'-triphosphate + H2O = a 2'-deoxyribonucleoside 5'-phosphate + diphosphate + H(+). In terms of biological role, nucleoside triphosphate pyrophosphatase. May have a dual role in cell division arrest and in preventing the incorporation of modified nucleotides into cellular nucleic acids. The chain is Nucleoside triphosphate pyrophosphatase (yhdE) from Shigella flexneri.